Here is a 425-residue protein sequence, read N- to C-terminus: Enolase (425 aa).

Gln162 is a (2R)-2-phosphoglycerate binding site. Glu204 (proton donor) is an active-site residue. Mg(2+)-binding residues include Asp241, Glu284, and Asp311. Residues Lys336, Arg365, Ser366, and Lys387 each coordinate (2R)-2-phosphoglycerate. Catalysis depends on Lys336, which acts as the Proton acceptor.

It belongs to the enolase family. Requires Mg(2+) as cofactor.

It is found in the cytoplasm. The protein resides in the secreted. Its subcellular location is the cell surface. The enzyme catalyses (2R)-2-phosphoglycerate = phosphoenolpyruvate + H2O. It participates in carbohydrate degradation; glycolysis; pyruvate from D-glyceraldehyde 3-phosphate: step 4/5. Its function is as follows. Catalyzes the reversible conversion of 2-phosphoglycerate (2-PG) into phosphoenolpyruvate (PEP). It is essential for the degradation of carbohydrates via glycolysis. The polypeptide is Enolase (Brucella melitensis biotype 2 (strain ATCC 23457)).